Reading from the N-terminus, the 378-residue chain is SPbeta prophage-derived uncharacterized protein YorJ (378 aa).

The protein is SPbeta prophage-derived uncharacterized protein YorJ (yorJ) of Bacillus subtilis (strain 168).